A 119-amino-acid polypeptide reads, in one-letter code: Large ribosomal subunit protein bL20 (119 aa).

It belongs to the bacterial ribosomal protein bL20 family.

Binds directly to 23S ribosomal RNA and is necessary for the in vitro assembly process of the 50S ribosomal subunit. It is not involved in the protein synthesizing functions of that subunit. The sequence is that of Large ribosomal subunit protein bL20 from Levilactobacillus brevis (strain ATCC 367 / BCRC 12310 / CIP 105137 / JCM 1170 / LMG 11437 / NCIMB 947 / NCTC 947) (Lactobacillus brevis).